A 444-amino-acid chain; its full sequence is Tubulin beta-2 chain (444 aa).

Positions 11, 69, 138, 142, 143, 144, 204, and 226 each coordinate GTP. Residue glutamate 69 participates in Mg(2+) binding.

The protein belongs to the tubulin family. In terms of assembly, dimer of alpha and beta chains. A typical microtubule is a hollow water-filled tube with an outer diameter of 25 nm and an inner diameter of 15 nM. Alpha-beta heterodimers associate head-to-tail to form protofilaments running lengthwise along the microtubule wall with the beta-tubulin subunit facing the microtubule plus end conferring a structural polarity. Microtubules usually have 13 protofilaments but different protofilament numbers can be found in some organisms and specialized cells. Mg(2+) is required as a cofactor.

The protein resides in the cytoplasm. Its subcellular location is the cytoskeleton. Tubulin is the major constituent of microtubules, a cylinder consisting of laterally associated linear protofilaments composed of alpha- and beta-tubulin heterodimers. Microtubules grow by the addition of GTP-tubulin dimers to the microtubule end, where a stabilizing cap forms. Below the cap, tubulin dimers are in GDP-bound state, owing to GTPase activity of alpha-tubulin. The protein is Tubulin beta-2 chain (TUBB2) of Zea mays (Maize).